Consider the following 226-residue polypeptide: Thioredoxin domain-containing protein 9 (226 aa).

In terms of domain architecture, Thioredoxin spans 74–180 (REIPSERDFF…TTETLEWRLG (107 aa)). Serine 188, serine 221, and serine 223 each carry phosphoserine.

In terms of assembly, forms ternary complexes with the chaperonin TCP1 complex, spanning the cylindrical chaperonin cavity and contacting at least 2 subunits.

Its subcellular location is the cytoplasm. It localises to the nucleus. The protein localises to the cytoskeleton. The protein resides in the microtubule organizing center. It is found in the centrosome. Its subcellular location is the midbody. Significantly diminishes the chaperonin TCP1 complex ATPase activity, thus negatively impacts protein folding, including that of actin or tubulin. The polypeptide is Thioredoxin domain-containing protein 9 (TXNDC9) (Homo sapiens (Human)).